Here is a 174-residue protein sequence, read N- to C-terminus: NADH-quinone oxidoreductase subunit B 1 (174 aa).

Cys53, Cys54, Cys118, and Cys148 together coordinate [4Fe-4S] cluster.

This sequence belongs to the complex I 20 kDa subunit family. In terms of assembly, NDH-1 is composed of 14 different subunits. Subunits NuoB, C, D, E, F, and G constitute the peripheral sector of the complex. It depends on [4Fe-4S] cluster as a cofactor.

The protein localises to the cell inner membrane. It carries out the reaction a quinone + NADH + 5 H(+)(in) = a quinol + NAD(+) + 4 H(+)(out). In terms of biological role, NDH-1 shuttles electrons from NADH, via FMN and iron-sulfur (Fe-S) centers, to quinones in the respiratory chain. The immediate electron acceptor for the enzyme in this species is believed to be ubiquinone. Couples the redox reaction to proton translocation (for every two electrons transferred, four hydrogen ions are translocated across the cytoplasmic membrane), and thus conserves the redox energy in a proton gradient. The polypeptide is NADH-quinone oxidoreductase subunit B 1 (Cereibacter sphaeroides (strain KD131 / KCTC 12085) (Rhodobacter sphaeroides)).